The sequence spans 383 residues: Acetylornithine deacetylase (383 aa).

H80 lines the Zn(2+) pocket. Residue D82 is part of the active site. D112 serves as a coordination point for Zn(2+). The active site involves E144. Zn(2+) contacts are provided by E145, E169, and H355.

Belongs to the peptidase M20A family. ArgE subfamily. As to quaternary structure, homodimer. The cofactor is Zn(2+). Co(2+) serves as cofactor. Requires glutathione as cofactor.

Its subcellular location is the cytoplasm. It catalyses the reaction N(2)-acetyl-L-ornithine + H2O = L-ornithine + acetate. It participates in amino-acid biosynthesis; L-arginine biosynthesis; L-ornithine from N(2)-acetyl-L-ornithine (linear): step 1/1. Catalyzes the hydrolysis of the amide bond of N(2)-acetylated L-amino acids. Cleaves the acetyl group from N-acetyl-L-ornithine to form L-ornithine, an intermediate in L-arginine biosynthesis pathway, and a branchpoint in the synthesis of polyamines. The chain is Acetylornithine deacetylase from Escherichia coli O9:H4 (strain HS).